Reading from the N-terminus, the 91-residue chain is Small ribosomal subunit protein bS16 (91 aa).

It belongs to the bacterial ribosomal protein bS16 family.

The chain is Small ribosomal subunit protein bS16 from Phytoplasma australiense.